Here is an 88-residue protein sequence, read N- to C-terminus: Large ribosomal subunit protein bL31B (88 aa).

The protein belongs to the bacterial ribosomal protein bL31 family. Type B subfamily. Part of the 50S ribosomal subunit.

The chain is Large ribosomal subunit protein bL31B from Leuconostoc mesenteroides subsp. mesenteroides (strain ATCC 8293 / DSM 20343 / BCRC 11652 / CCM 1803 / JCM 6124 / NCDO 523 / NBRC 100496 / NCIMB 8023 / NCTC 12954 / NRRL B-1118 / 37Y).